The primary structure comprises 130 residues: Sec-independent protein translocase protein TatB (130 aa).

A helical membrane pass occupies residues 1-21 (MFDIGFWELVLIFVVGLVVLG). The tract at residues 85–130 (LKQAAQSVNRPYADVSAKNEATSSSSSDATHQTEATKTSAANTKSE) is disordered. Positions 112–130 (DATHQTEATKTSAANTKSE) are enriched in polar residues.

The protein belongs to the TatB family. As to quaternary structure, the Tat system comprises two distinct complexes: a TatABC complex, containing multiple copies of TatA, TatB and TatC subunits, and a separate TatA complex, containing only TatA subunits. Substrates initially bind to the TatABC complex, which probably triggers association of the separate TatA complex to form the active translocon.

The protein resides in the cell inner membrane. Functionally, part of the twin-arginine translocation (Tat) system that transports large folded proteins containing a characteristic twin-arginine motif in their signal peptide across membranes. Together with TatC, TatB is part of a receptor directly interacting with Tat signal peptides. TatB may form an oligomeric binding site that transiently accommodates folded Tat precursor proteins before their translocation. This chain is Sec-independent protein translocase protein TatB, found in Vibrio vulnificus (strain CMCP6).